The following is an 885-amino-acid chain: Protein kintoun (885 aa).

6 disordered regions span residues 208–235, 371–390, 607–636, 644–663, 781–806, and 819–871; these read LSKN…ADAG, LSRE…PVED, ELQQ…ESAC, EHHE…QRSY, RRLS…QPAH, and NNNH…MMFE. Basic and acidic residues predominate over residues 213-232; that stretch reads TAEEKEPHPLEHMYPKKPEA. Position 376 is a phosphoserine (Ser376). Residues 612–629 are compositionally biased toward basic residues; that stretch reads HHQKKLNKKQRKRNKKQR. Ser784 carries the post-translational modification Phosphoserine. The segment covering 824–837 has biased composition (basic and acidic residues); it reads HVKDNKKQSLHDSG. Residues 842 to 855 show a composition bias toward low complexity; the sequence is NGSINNKNNHSNEN.

The protein belongs to the PIH1 family. Kintoun subfamily. Interacts with Pp1alpha-96A, Pp1-87B, Pp1-13C and flw.

It is found in the cytoplasm. Required for cytoplasmic pre-assembly of axonemal dyneins, thereby playing a central role in motility in cilia and flagella. Involved in pre-assembly of dynein arm complexes in the cytoplasm before intraflagellar transport loads them for the ciliary compartment. The polypeptide is Protein kintoun (Drosophila mojavensis (Fruit fly)).